We begin with the raw amino-acid sequence, 373 residues long: NADPH-dependent 3-keto-steroid reductase Hsd3b5 (373 aa).

NADP(+)-binding positions include 10-15, Y155, and K159; that span reads GAGGFL. K159 acts as the Proton donor in catalysis. A helical transmembrane segment spans residues 288–308; that stretch reads LSLLYWLAFLLETVSFLLRPV. K350 carries the N6-acetyllysine modification.

The protein belongs to the 3-beta-HSD family. As to expression, expressed in the male liver, starting in late puberty.

Its subcellular location is the endoplasmic reticulum membrane. The protein resides in the mitochondrion membrane. It catalyses the reaction a 3beta-hydroxysteroid + NADP(+) = a 3-oxosteroid + NADPH + H(+). The catalysed reaction is 5alpha-androstane-3beta,17beta-diol + NADP(+) = 17beta-hydroxy-5alpha-androstan-3-one + NADPH + H(+). Its pathway is steroid metabolism. Functionally, responsible for the reduction of the oxo group on the C-3 of 5alpha-androstane steroids. Catalyzes the conversion of dihydrotestosterone to its inactive form 5alpha-androstanediol, that does not bind androgen receptor/AR. Does not function as an isomerase. The sequence is that of NADPH-dependent 3-keto-steroid reductase Hsd3b5 from Mus musculus (Mouse).